Here is a 408-residue protein sequence, read N- to C-terminus: MAHITINQYLQQVCEAIDTRDGASLAELVSFKHPHVANPRLQMASPEEKCQQVLEPPYDEMFAAHLRCTYAVGNHDFIEAYKCQTVIVQSFLRAFQAHKEENWALPVMYAVALDLRIFANNADQQLVKKGKSKVGDMLEKAAELLMGCFRVCASDTRAGIEDSKKRGMLFLVNQLFKIYFKINKLHLCKPLIRAIDSSNLKDDYSTAQRVTYRYYVGRKAMFDSDFKQAEEYLSFAFEHCHRSSQKNKRMVLIYLLPVKMLLGHMPTIELLRKYHLMQFAEVTRAVSEGNLLLLNEALAAHETFFIRCGIFLILEKLKIITYRNLFKKVNSLSSASSRYLLLKTHQLSLDAFLVALKFMQVEDVDIAEVQCILANLIYMGHIKGYISHQHQKLVVSKQNPFPPLSTVC.

Residue alanine 2 is modified to N-acetylalanine. A Phosphoserine modification is found at serine 45. Positions 210–400 constitute a PCI domain; sequence VTYRYYVGRK…QKLVVSKQNP (191 aa).

The protein belongs to the CSN12 family. In terms of assembly, component of the nuclear pore complex (NPC)-associated TREX-2 complex (transcription and export complex 2), composed of at least GANP, 2 copies of ENY2, PCID2, SEM1/DSS1, and either centrin CETN2 or centrin CETN3. The TREX-2 complex also associates with ALYREF/ALY and with the nucleoporin NUP153. Interacts with BRCA2. Interacts with SRCAP chromatin remodeling complex component ZNHIT1; the interaction results in inhibition of SRCAP complex activity, preventing the deposition of histone variant H2AZ1/H2A.Z to lymphoid fate regulator genes and restricting lymphoid lineage commitment.

Its subcellular location is the cytoplasm. It is found in the nucleus. It localises to the nuclear pore complex. Its function is as follows. Required for B-cell survival through the regulation of the expression of cell-cycle checkpoint MAD2L1 protein during B cell differentiation. As a component of the TREX-2 complex, involved in the export of mRNAs to the cytoplasm through the nuclear pores. Binds and stabilizes BRCA2 and is thus involved in the control of R-loop-associated DNA damage and transcription-associated genomic instability. Blocks the activity of the SRCAP chromatin remodeling complex by interacting with SRCAP complex member ZNHIT1 and inhibiting its interaction with the complex. This prevents the deposition of histone variant H2AZ1/H2A.Z at the nucleosomes of key lymphoid fate regulator genes which suppresses their expression and restricts lymphoid lineage commitment. The protein is PCI domain-containing protein 2 (PCID2) of Bos taurus (Bovine).